A 444-amino-acid chain; its full sequence is Endoglucanase N (444 aa).

Residues 1–31 (MWMRRNQIVRKLTLGVVTTVLGMSLSFSALS) form the signal peptide. Residues His64, 68 to 69 (WF), Tyr95, and His130 each bind substrate. The active-site Proton donor is Glu168. Tyr230 contributes to the substrate binding site. Glu256 (nucleophile) is an active-site residue. Residues 262 to 263 (AS), Trp290, and 295 to 297 (KSE) each bind substrate. The interval 332 to 358 (ANLGGGDTPTTPTTPTEPTNPGNGTTG) is disordered. The span at 339 to 358 (TPTTPTTPTEPTNPGNGTTG) shows a compositional bias: low complexity. One can recognise a CBM3 domain in the interval 356 to 444 (TTGDVVLQYR…DKANRYVLVT (89 aa)).

It belongs to the glycosyl hydrolase 5 (cellulase A) family.

The protein localises to the secreted. It catalyses the reaction Endohydrolysis of (1-&gt;4)-beta-D-glucosidic linkages in cellulose, lichenin and cereal beta-D-glucans.. This is Endoglucanase N (celN) from Pectobacterium atrosepticum (Erwinia carotovora subsp. atroseptica).